A 600-amino-acid chain; its full sequence is Aspartate--tRNA(Asp/Asn) ligase (600 aa).

Position 187 (Glu187) interacts with L-aspartate. The interval Gln211–Lys214 is aspartate. Arg233 and His463 together coordinate L-aspartate. Arg233–Glu235 provides a ligand contact to ATP. Glu497 is a binding site for ATP. Arg504 lines the L-aspartate pocket. Gly549–Arg552 is an ATP binding site.

This sequence belongs to the class-II aminoacyl-tRNA synthetase family. Type 1 subfamily. Homodimer.

It is found in the cytoplasm. It catalyses the reaction tRNA(Asx) + L-aspartate + ATP = L-aspartyl-tRNA(Asx) + AMP + diphosphate. Its function is as follows. Aspartyl-tRNA synthetase with relaxed tRNA specificity since it is able to aspartylate not only its cognate tRNA(Asp) but also tRNA(Asn). Reaction proceeds in two steps: L-aspartate is first activated by ATP to form Asp-AMP and then transferred to the acceptor end of tRNA(Asp/Asn). This is Aspartate--tRNA(Asp/Asn) ligase from Wolbachia pipientis wMel.